The sequence spans 141 residues: Hemoglobin subunit alpha (141 aa).

Positions 1–141 (VLSPADKTNV…VSTVLTSKYR (141 aa)) constitute a Globin domain. At Ser3 the chain carries Phosphoserine. The residue at position 7 (Lys7) is an N6-succinyllysine. Residue Thr8 is modified to Phosphothreonine. Residue Lys11 is modified to N6-succinyllysine. Residue Lys16 is modified to N6-acetyllysine; alternate. Lys16 carries the post-translational modification N6-succinyllysine; alternate. A Phosphotyrosine modification is found at Tyr24. Ser35 is modified (phosphoserine). Lys40 carries the N6-succinyllysine modification. Ser49 bears the Phosphoserine mark. Residue His58 participates in O2 binding. His87 contacts heme b. Ser102 is subject to Phosphoserine. Phosphothreonine is present on Thr108. Ser124 carries the post-translational modification Phosphoserine. 2 positions are modified to phosphothreonine: Thr134 and Thr137. Position 138 is a phosphoserine (Ser138).

The protein belongs to the globin family. In terms of assembly, heterotetramer of two alpha chains and two beta chains. Red blood cells.

Functionally, involved in oxygen transport from the lung to the various peripheral tissues. In terms of biological role, hemopressin acts as an antagonist peptide of the cannabinoid receptor CNR1. Hemopressin-binding efficiently blocks cannabinoid receptor CNR1 and subsequent signaling. This Odobenus rosmarus divergens (Pacific walrus) protein is Hemoglobin subunit alpha (HBA).